A 509-amino-acid chain; its full sequence is MANFTFGDLALDVARMGGLASTPSGLRSTGLTTPGLSPTGLVTSDFNDSYGLTGQFINGSHSSRSRDNASANDTSATNMTDDRYWSLTVYSHEHLVLTSVILGLFVLCCIIGNCFVIAAVMLERSLHNVANYLILSLAVADLMVAVLVMPLSVVSEISKVWFLHSEVCDMWISVDVLCCTASILHLVAIAMDRYWAVTSIDYIRRRSARRILLMIMVVWIVALFISIPPLFGWRDPNNDPDKTGTCIISQDKGYTIFSTVGAFYLPMLVMMIIYIRIWLVARSRIRKDKFQMTKARLKTEETTLVASPKTEYSVVSDCNGCNSPDSTTEKKKRRAPFKSYGCSPRPERKKNRAKKLPENANGVNSNSSSSERLKQIQIETAEAFANGCAEEASIAMLERQCNNGKKISSNDTPYSRTREKLELKRERKAARTLAIITGAFLICWLPFFIIALIGPFVDPEGIPPFARSFVLWLGYFNSLLNPIIYTIFSPEFRSAFQKILFGKYRRGHR.

Topologically, residues Met-1–Ser-99 are extracellular. Asn-3, Asn-47, Asn-58, Asn-68, Asn-72, and Asn-78 each carry an N-linked (GlcNAc...) asparagine glycan. Residues Val-100–Leu-122 traverse the membrane as a helical segment. Residues Glu-123–Tyr-132 are Cytoplasmic-facing. Residues Leu-133–Val-154 traverse the membrane as a helical segment. At Ser-155–Asp-169 the chain is on the extracellular side. Cysteines 168 and 246 form a disulfide. Residues Met-170–Met-191 form a helical membrane-spanning segment. Residues Asp-192–Arg-210 lie on the Cytoplasmic side of the membrane. Residues Ile-211 to Trp-233 traverse the membrane as a helical segment. The Extracellular segment spans residues Arg-234 to Thr-259. A helical membrane pass occupies residues Val-260 to Ala-281. Residues Arg-282–Thr-432 are Cytoplasmic-facing. The interval Ser-323–Arg-372 is disordered. The helical transmembrane segment at Leu-433–Phe-456 threads the bilayer. Residues Val-457–Phe-465 are Extracellular-facing. A helical transmembrane segment spans residues Ala-466–Phe-488. Topologically, residues Ser-489 to Arg-509 are cytoplasmic.

The protein belongs to the G-protein coupled receptor 1 family.

The protein localises to the cell membrane. In terms of biological role, this is a receptor for 5-hydroxytryptamine (serotonin), a biogenic hormone that function as a neurotransmitter, a hormone, and a mitogen. The polypeptide is 5-hydroxytryptamine receptor (Lymnaea stagnalis (Great pond snail)).